A 463-amino-acid polypeptide reads, in one-letter code: Chaperone SurA (463 aa).

A signal peptide spans 1–25; the sequence is MTKPFSVLLASLLVITSTVSPLASA. PpiC domains lie at 174 to 276 and 289 to 388; these read GSQY…KLVE and LTEY…QRVG. Disordered regions lie at residues 329 to 348 and 434 to 463; these read ATAKESSEDTNSRGQGGDLG and GDRADADATAAPEPAAAPAAPTPPPAQPTR. Over residues 440 to 452 the composition is skewed to low complexity; that stretch reads DATAAPEPAAAPA. Pro residues predominate over residues 453-463; the sequence is APTPPPAQPTR.

It localises to the periplasm. It catalyses the reaction [protein]-peptidylproline (omega=180) = [protein]-peptidylproline (omega=0). In terms of biological role, chaperone involved in the correct folding and assembly of outer membrane proteins. Recognizes specific patterns of aromatic residues and the orientation of their side chains, which are found more frequently in integral outer membrane proteins. May act in both early periplasmic and late outer membrane-associated steps of protein maturation. This is Chaperone SurA from Xanthomonas campestris pv. campestris (strain 8004).